The chain runs to 410 residues: Killer cell immunoglobulin-like receptor 3DL3 (410 aa).

Residues 1 to 25 (MSLMVVSMACVGFFLLEGPWPHVGG) form the signal peptide. Residues 26-322 (QDKPFLSAWP…VSVTGNSRHL (297 aa)) lie on the Extracellular side of the membrane. Ig-like C2-type domains follow at residues 42-97 (GQHV…RCCS), 137-197 (GETV…RCFG), and 237-295 (GENV…RCFG). 2 disulfide bridges follow: Cys49–Cys95 and Cys144–Cys195. N-linked (GlcNAc...) asparagine glycosylation is found at Asn179, Asn239, and Asn273. A disulfide bond links Cys244 and Cys293. The chain crosses the membrane as a helical span at residues 323–343 (HVLIGTSVVIIPFAILLFFLL). Over 344–410 (HRWCANKKNA…PKTPPTDTSV (67 aa)) the chain is Cytoplasmic.

It belongs to the immunoglobulin superfamily.

Its subcellular location is the cell membrane. Its function is as follows. Receptor on natural killer cells. May inhibit the activity of NK cells thus preventing cell lysis. The polypeptide is Killer cell immunoglobulin-like receptor 3DL3 (KIR3DL3) (Homo sapiens (Human)).